The following is a 155-amino-acid chain: Small ribosomal subunit protein eS19B (155 aa).

Belongs to the eukaryotic ribosomal protein eS19 family.

This chain is Small ribosomal subunit protein eS19B (RpS19b), found in Drosophila melanogaster (Fruit fly).